The sequence spans 191 residues: Cell division protein SepF (191 aa).

Positions E21–T96 are disordered. Over residues P25–S56 the composition is skewed to low complexity. 2 stretches are compositionally biased toward polar residues: residues R57 to R69 and H86 to T95.

It belongs to the SepF family. In terms of assembly, homodimer. Interacts with FtsZ.

It is found in the cytoplasm. Its function is as follows. Cell division protein that is part of the divisome complex and is recruited early to the Z-ring. Probably stimulates Z-ring formation, perhaps through the cross-linking of FtsZ protofilaments. Its function overlaps with FtsA. The sequence is that of Cell division protein SepF from Streptococcus mutans serotype c (strain ATCC 700610 / UA159).